The chain runs to 235 residues: Eukaryotic translation initiation factor 4E-1 (235 aa).

Positions 16-25 (VNKHRGVRSD) are enriched in basic and acidic residues. The tract at residues 16 to 56 (VNKHRGVRSDGEEDEQLEEGEIVGGDADTLSSSSSSRPGTA) is disordered. The segment covering 26-36 (GEEDEQLEEGE) has biased composition (acidic residues). EIF4G-binding stretches follow at residues 60-63 (HPLE) and 70-106 (FDTP…NNIH). Residues 78–83 (KQVAWG), Lys-110, and 128–129 (WE) each bind mRNA. Cysteines 133 and 171 form a disulfide. The interval 154 to 163 (YTLLAMIGEQ) is EIF4G-binding. MRNA is bound by residues 178–183 (RARQEK) and 223–227 (KTLDR).

The protein belongs to the eukaryotic initiation factor 4E family. EIF4F is a multi-subunit complex, the composition of which varies with external and internal environmental conditions. It is composed of at least EIF4A, EIF4E and EIF4G. EIF4E is also known to interact with other partners. In higher plants two isoforms of EIF4F have been identified, named isoform EIF4F and isoform EIF(iso)4F. Isoform EIF4F has subunits p220 and p26, whereas isoform EIF(iso)4F has subunits p82 and p28. As to quaternary structure, (Microbial infection) Interacts with potyvirus viral genome-linked protein (VPg); this interaction is possible in susceptible hosts but impaired in resistant plants. In terms of processing, according to the redox status, the Cys-133-Cys-171 disulfide bridge may have a role in regulating protein function by affecting its ability to bind capped mRNA.

The protein resides in the nucleus. Its subcellular location is the cytoplasm. Its function is as follows. Component of the protein complex eIF4F, which is involved in the recognition of the mRNA cap, ATP-dependent unwinding of 5'-terminal secondary structure and recruitment of mRNA to the ribosome. Recognizes and binds the 7-methylguanosine-containing mRNA cap during an early step in the initiation of protein synthesis and facilitates ribosome binding by inducing the unwinding of the mRNAs secondary structures. Key component of recessive resistance to potyviruses. (Microbial infection) Susceptibility host factor required for viral infection by recruiting viral RNAs to the host ribosomal complex via an interaction with viral genome-linked protein (VPg). This Lactuca sativa (Garden lettuce) protein is Eukaryotic translation initiation factor 4E-1.